The chain runs to 105 residues: uncharacterized protein (105 aa).

Helical transmembrane passes span 7–26 (VLSVISVFSAAALVYRWLSL) and 30–52 (VDMTVIFFATLLIASLTLLLISI).

The protein localises to the cell membrane. This is an uncharacterized protein from Archaeoglobus fulgidus (strain ATCC 49558 / DSM 4304 / JCM 9628 / NBRC 100126 / VC-16).